Here is a 95-residue protein sequence, read N- to C-terminus: Aspartyl/glutamyl-tRNA(Asn/Gln) amidotransferase subunit C (95 aa).

This sequence belongs to the GatC family. Heterotrimer of A, B and C subunits.

It catalyses the reaction L-glutamyl-tRNA(Gln) + L-glutamine + ATP + H2O = L-glutaminyl-tRNA(Gln) + L-glutamate + ADP + phosphate + H(+). It carries out the reaction L-aspartyl-tRNA(Asn) + L-glutamine + ATP + H2O = L-asparaginyl-tRNA(Asn) + L-glutamate + ADP + phosphate + 2 H(+). In terms of biological role, allows the formation of correctly charged Asn-tRNA(Asn) or Gln-tRNA(Gln) through the transamidation of misacylated Asp-tRNA(Asn) or Glu-tRNA(Gln) in organisms which lack either or both of asparaginyl-tRNA or glutaminyl-tRNA synthetases. The reaction takes place in the presence of glutamine and ATP through an activated phospho-Asp-tRNA(Asn) or phospho-Glu-tRNA(Gln). This is Aspartyl/glutamyl-tRNA(Asn/Gln) amidotransferase subunit C from Halothermothrix orenii (strain H 168 / OCM 544 / DSM 9562).